The chain runs to 427 residues: Carboxyl-terminal-processing protease (427 aa).

Positions 1–31 (MGKRTRRFWALAFSLLMGALIYLGNTPSALA) are cleaved as a signal peptide. Residues 104–186 (NLQVTTTGEL…TKVSLEILSA (83 aa)) enclose the PDZ domain. Residues serine 313, aspartate 324, and lysine 338 each act as charge relay system in the active site.

It belongs to the peptidase S41A family.

It is found in the cellular thylakoid lumen. The enzyme catalyses The enzyme shows specific recognition of a C-terminal tripeptide, Xaa-Yaa-Zaa, in which Xaa is preferably Ala or Leu, Yaa is preferably Ala or Tyr, and Zaa is preferably Ala, but then cleaves at a variable distance from the C-terminus. A typical cleavage is -Ala-Ala-|-Arg-Ala-Ala-Lys-Glu-Asn-Tyr-Ala-Leu-Ala-Ala.. Cleavage of the 16 C-terminal residues from the D1 precursor of photosystem II (PSII). This proteolytic processing is necessary to allow the light-driven assembly of the oxygen-evolving cluster (a tetranuclear manganese), which is responsible for photosynthetic water oxidation. This is Carboxyl-terminal-processing protease (ctpA) from Synechocystis sp. (strain ATCC 27184 / PCC 6803 / Kazusa).